We begin with the raw amino-acid sequence, 362 residues long: Probable cinnamyl alcohol dehydrogenase 8D (362 aa).

Cysteine 45 contributes to the Zn(2+) binding site. Threonine 47 is a binding site for NADP(+). Zn(2+)-binding residues include histidine 67, glutamate 68, cysteine 98, cysteine 101, cysteine 104, cysteine 112, and cysteine 161. NADP(+) contacts are provided by residues threonine 165, 186 to 191, 209 to 214, threonine 249, glycine 273, and 296 to 298; these read GLGGLG, SSSPAK, and NGV.

Belongs to the zinc-containing alcohol dehydrogenase family. Homodimer. Zn(2+) is required as a cofactor.

It carries out the reaction (E)-cinnamyl alcohol + NADP(+) = (E)-cinnamaldehyde + NADPH + H(+). The catalysed reaction is (E)-coniferol + NADP(+) = (E)-coniferaldehyde + NADPH + H(+). It catalyses the reaction (E)-sinapyl alcohol + NADP(+) = (E)-sinapaldehyde + NADPH + H(+). The enzyme catalyses (E)-4-coumaroyl alcohol + NADP(+) = (E)-4-coumaraldehyde + NADPH + H(+). It carries out the reaction (E)-caffeyl alcohol + NADP(+) = (E)-caffeyl aldehyde + NADPH + H(+). Its pathway is aromatic compound metabolism; phenylpropanoid biosynthesis. Functionally, involved in lignin biosynthesis. Catalyzes the final step specific for the production of lignin monomers. Catalyzes the NADPH-dependent reduction of coniferaldehyde, 5-hydroxyconiferaldehyde, sinapaldehyde, 4-coumaraldehyde and caffeyl aldehyde to their respective alcohols. The protein is Probable cinnamyl alcohol dehydrogenase 8D of Oryza sativa subsp. japonica (Rice).